We begin with the raw amino-acid sequence, 206 residues long: Cytochrome c oxidase assembly factor 8 (206 aa).

A mitochondrion-targeting transit peptide spans 1 to 39; sequence MLPCAAGARGRGAMVVLRAGKKTFLPPLCRAFACRGCQL.

The protein belongs to the COA8 family. N-terminal mitochondrial targeting sequence is cleaved from the mature protein once in the mitochondrion. In terms of processing, in normal conditions, the cytoplasmic precursor protein is rapidly degraded by the ubiquitination-proteasome system (UPS). Oxidative stress induces protein stabilization and import into mitochondria where it protects COX from degradation. As to expression, expressed in fibroblasts.

It localises to the mitochondrion inner membrane. Functionally, required for cytochrome c complex (COX) IV assembly and function Protects COX assembly from oxidation-induced degradation, COX being the terminal component of the mitochondrial respiratory chain. The chain is Cytochrome c oxidase assembly factor 8 from Homo sapiens (Human).